The sequence spans 383 residues: Transcription factor Y1 (383 aa).

2 consecutive HTH myb-type domains span residues 9-61 (KVGL…INYL) and 62-116 (RADV…SRQI). DNA-binding regions (H-T-H motif) lie at residues 37 to 61 (WRSL…INYL) and 89 to 112 (WSLI…NSHL). The tract at residues 136–250 (SKLHSAEKRR…DATGPWELDP (115 aa)) is disordered. Low complexity-rich tracts occupy residues 155–170 (KSSS…SSKT) and 191–207 (ASSP…ASSP).

It is found in the nucleus. It participates in pigment biosynthesis. Functionally, transcription factor involved in regulating the biosynthetic pathway of flavan-4-ol-derived red phlobaphene and red-brown 3-deoxyanthocyanidin (3-DA) pigments. Regulates transcription of chalcone synthase, chalcone isomerase, dihydroflavonol reductase and flavonoid 3'-hydroxylase genes required for the phlobaphene and 3-DA biosynthesis. Transcription of these genes is activated in mesocotyls in response to ingress of non-pathogenic fungus C.heterostrophus. Regulates the production of 3-DA phytoalexins (luteolinidin, 5-methoxyluteolinidin, apigeninidin and 7-methoxyapigeninidin) in mesocotyls in response to C.heterostrophus and corn leaf aphid (CLA) R.maidis. Involved in resistance against anthracnose leaf blight (ALB) caused by the pathogenic C.sublineolum fungus by inducing the production of 3-DA phytoalexins. Confers resistance, also by inducing the production of 3-DA phytoalexins, against CLA R.maidis, which is an insect and a pest. In Sorghum bicolor (Sorghum), this protein is Transcription factor Y1.